The sequence spans 395 residues: Succinyl-diaminopimelate desuccinylase (395 aa).

H74 is a binding site for Zn(2+). D76 is an active-site residue. D107 contacts Zn(2+). The active-site Proton acceptor is the E141. Residues E142, E170, and H368 each contribute to the Zn(2+) site.

The protein belongs to the peptidase M20A family. DapE subfamily. As to quaternary structure, homodimer. Zn(2+) serves as cofactor. Co(2+) is required as a cofactor.

The enzyme catalyses N-succinyl-(2S,6S)-2,6-diaminopimelate + H2O = (2S,6S)-2,6-diaminopimelate + succinate. It functions in the pathway amino-acid biosynthesis; L-lysine biosynthesis via DAP pathway; LL-2,6-diaminopimelate from (S)-tetrahydrodipicolinate (succinylase route): step 3/3. In terms of biological role, catalyzes the hydrolysis of N-succinyl-L,L-diaminopimelic acid (SDAP), forming succinate and LL-2,6-diaminopimelate (DAP), an intermediate involved in the bacterial biosynthesis of lysine and meso-diaminopimelic acid, an essential component of bacterial cell walls. The protein is Succinyl-diaminopimelate desuccinylase of Chelativorans sp. (strain BNC1).